Reading from the N-terminus, the 544-residue chain is Secreted aspartic protease 9 (544 aa).

A signal peptide spans 1–17 (MRLNSVALLSLVATALA). Positions 31 to 50 (GESKDDLSPEDDSNPRFVKR) are disordered. The Peptidase A1 domain maps to 65-479 (YMATLKIGSN…DLDDYEVSLA (415 aa)). Asp83 is an active-site residue. 83–85 (DTG) is a pepstatin A binding site. Cys98 and Cys195 are oxidised to a cystine. N-linked (GlcNAc...) asparagine glycosylation is found at Asn212, Asn240, and Asn252. The active site involves Asp371. 371-375 (DTGST) contributes to the pepstatin A binding site. Cys406 and Cys441 are disulfide-bonded. Residues Asn422 and Asn499 are each glycosylated (N-linked (GlcNAc...) asparagine). Residues 500 to 519 (SSGSGTTSSSGTSTSTSTRH) form a disordered region. A lipid anchor (GPI-anchor amidated serine) is attached at Ser520. A propeptide spans 521–544 (AGSIISKPVYGLLLSLLISCYVLV) (removed in mature form). Residues 524–544 (IISKPVYGLLLSLLISCYVLV) traverse the membrane as a helical segment.

The protein belongs to the peptidase A1 family. Monomer. In terms of processing, the GPI-anchor is attached to the protein in the endoplasmic reticulum and serves to target the protein to the cell surface. There, the glucosamine-inositol phospholipid moiety is cleaved off and the GPI-modified mannoprotein is covalently attached via its lipidless GPI glycan remnant to the 1,6-beta-glucan of the outer cell wall layer.

The protein resides in the cell membrane. It is found in the secreted. It localises to the cell wall. The catalysed reaction is Preferential cleavage at the carboxyl of hydrophobic amino acids, but fails to cleave 15-Leu-|-Tyr-16, 16-Tyr-|-Leu-17 and 24-Phe-|-Phe-25 of insulin B chain. Activates trypsinogen, and degrades keratin.. Its function is as follows. Secreted aspartic peptidases (SAPs) are a group of ten acidic hydrolases considered as key virulence factors. These enzymes supply the fungus with nutrient amino acids as well as are able to degrade the selected host's proteins involved in the immune defense. Moreover, acts toward human hemoglobin though limited proteolysis to generate a variety of antimicrobial hemocidins, enabling to compete with the other microorganisms of the same physiological niche using the microbicidal peptides generated from the host protein. In terms of biological role, plays a key role in defense against host by cleaving histatin-5 (Hst 5), a peptide from human saliva that carries out fungicidal activity. The cleavage rate decreases in an order of SAP2 &gt; SAP9 &gt; SAP3 &gt; SAP7 &gt; SAP4 &gt; SAP1 &gt; SAP8. The first cleavage occurs between residues 'Lys-17' and 'His-18' of Hst 5, giving DSHAKRHHGYKRKFHEK and HHSHRGY peptides. Simultaneously, the DSHAKRHHGYKRK peptide is also formed. Further fragmentation by SAP9 results in FHEK product. This is Secreted aspartic protease 9 from Candida albicans (strain SC5314 / ATCC MYA-2876) (Yeast).